Consider the following 247-residue polypeptide: Uridylate kinase (247 aa).

17–20 (KFSG) is a binding site for ATP. G59 is a UMP binding site. ATP-binding residues include G60 and R64. UMP-binding positions include D79 and 140-147 (TGNPFFTT). ATP is bound by residues T167, Y173, and D176.

Belongs to the UMP kinase family. As to quaternary structure, homohexamer.

It localises to the cytoplasm. It catalyses the reaction UMP + ATP = UDP + ADP. It functions in the pathway pyrimidine metabolism; CTP biosynthesis via de novo pathway; UDP from UMP (UMPK route): step 1/1. Inhibited by UTP. Its function is as follows. Catalyzes the reversible phosphorylation of UMP to UDP. This Legionella pneumophila (strain Lens) protein is Uridylate kinase.